Consider the following 406-residue polypeptide: Argininosuccinate synthase (406 aa).

Residues 12 to 20 and alanine 39 each bind ATP; that span reads AYSGGLDTS. 2 residues coordinate L-citrulline: tyrosine 90 and serine 95. Glycine 120 is an ATP binding site. 3 residues coordinate L-aspartate: threonine 122, asparagine 126, and aspartate 127. Position 126 (asparagine 126) interacts with L-citrulline. L-citrulline is bound by residues arginine 130, serine 179, serine 188, glutamate 264, and tyrosine 276.

Belongs to the argininosuccinate synthase family. Type 1 subfamily. Homotetramer.

It is found in the cytoplasm. It carries out the reaction L-citrulline + L-aspartate + ATP = 2-(N(omega)-L-arginino)succinate + AMP + diphosphate + H(+). Its pathway is amino-acid biosynthesis; L-arginine biosynthesis; L-arginine from L-ornithine and carbamoyl phosphate: step 2/3. This Geotalea daltonii (strain DSM 22248 / JCM 15807 / FRC-32) (Geobacter daltonii) protein is Argininosuccinate synthase.